The primary structure comprises 107 residues: uncharacterized protein (107 aa).

Residues 25–42 traverse the membrane as a helical segment; that stretch reads LSLCSVLLSWLICAMCLW.

The protein localises to the host membrane. This is an uncharacterized protein from Galliformes (FAdV-1).